The sequence spans 337 residues: Phenylalanine--tRNA ligase alpha subunit (337 aa).

Glutamate 258 is a binding site for Mg(2+).

This sequence belongs to the class-II aminoacyl-tRNA synthetase family. Phe-tRNA synthetase alpha subunit type 1 subfamily. As to quaternary structure, tetramer of two alpha and two beta subunits. The cofactor is Mg(2+).

It is found in the cytoplasm. It carries out the reaction tRNA(Phe) + L-phenylalanine + ATP = L-phenylalanyl-tRNA(Phe) + AMP + diphosphate + H(+). The sequence is that of Phenylalanine--tRNA ligase alpha subunit from Burkholderia vietnamiensis (strain G4 / LMG 22486) (Burkholderia cepacia (strain R1808)).